Reading from the N-terminus, the 449-residue chain is Glucose-6-phosphate isomerase (449 aa).

Glutamate 291 (proton donor) is an active-site residue. Catalysis depends on residues histidine 312 and lysine 426.

This sequence belongs to the GPI family.

The protein localises to the cytoplasm. The enzyme catalyses alpha-D-glucose 6-phosphate = beta-D-fructose 6-phosphate. Its pathway is carbohydrate biosynthesis; gluconeogenesis. The protein operates within carbohydrate degradation; glycolysis; D-glyceraldehyde 3-phosphate and glycerone phosphate from D-glucose: step 2/4. Its function is as follows. Catalyzes the reversible isomerization of glucose-6-phosphate to fructose-6-phosphate. This is Glucose-6-phosphate isomerase from Enterococcus faecalis (strain ATCC 700802 / V583).